The primary structure comprises 247 residues: uncharacterized protein (247 aa).

The interval 225–247 (LASAPVPPSGSGNSGHRRANLGL) is disordered.

This is an uncharacterized protein from Methanocaldococcus jannaschii (strain ATCC 43067 / DSM 2661 / JAL-1 / JCM 10045 / NBRC 100440) (Methanococcus jannaschii).